A 303-amino-acid chain; its full sequence is Catechol 1,2-dioxygenase (303 aa).

4 residues coordinate Fe cation: tyrosine 156, tyrosine 191, histidine 215, and histidine 217.

In terms of assembly, homodimer. Fe(3+) serves as cofactor.

The catalysed reaction is catechol + O2 = cis,cis-muconate + 2 H(+). Its pathway is aromatic compound metabolism; beta-ketoadipate pathway; 5-oxo-4,5-dihydro-2-furylacetate from catechol: step 1/3. Inhibited by Ag(+), Cu(+), Hg(2+) and Pb(2+). Its function is as follows. Can cleave 4-methylcatechol at lower rates than catechol, but has no activity with 3-methylcatechol, 4-chlorocatechol, 4-carboxycatechol or hydroxyquinol. The chain is Catechol 1,2-dioxygenase (HQD2) from Candida albicans (strain SC5314 / ATCC MYA-2876) (Yeast).